A 289-amino-acid chain; its full sequence is Ribosomal protein L11 methyltransferase (289 aa).

Threonine 135, glycine 156, aspartate 179, and asparagine 225 together coordinate S-adenosyl-L-methionine.

It belongs to the methyltransferase superfamily. PrmA family.

Its subcellular location is the cytoplasm. The catalysed reaction is L-lysyl-[protein] + 3 S-adenosyl-L-methionine = N(6),N(6),N(6)-trimethyl-L-lysyl-[protein] + 3 S-adenosyl-L-homocysteine + 3 H(+). Methylates ribosomal protein L11. This chain is Ribosomal protein L11 methyltransferase, found in Chlorobaculum parvum (strain DSM 263 / NCIMB 8327) (Chlorobium vibrioforme subsp. thiosulfatophilum).